A 447-amino-acid polypeptide reads, in one-letter code: N-succinylarginine dihydrolase (447 aa).

Residues 19 to 28 (AGLSFGNEAS), asparagine 110, and 137 to 138 (HR) each bind substrate. Glutamate 174 is an active-site residue. Substrate is bound at residue arginine 214. Histidine 250 is a catalytic residue. The substrate site is built by aspartate 252 and asparagine 365. The active-site Nucleophile is the cysteine 371.

The protein belongs to the succinylarginine dihydrolase family. Homodimer.

It catalyses the reaction N(2)-succinyl-L-arginine + 2 H2O + 2 H(+) = N(2)-succinyl-L-ornithine + 2 NH4(+) + CO2. It functions in the pathway amino-acid degradation; L-arginine degradation via AST pathway; L-glutamate and succinate from L-arginine: step 2/5. Catalyzes the hydrolysis of N(2)-succinylarginine into N(2)-succinylornithine, ammonia and CO(2). In Acinetobacter baumannii (strain ACICU), this protein is N-succinylarginine dihydrolase.